We begin with the raw amino-acid sequence, 208 residues long: Interleukin-6 (208 aa).

Positions 1–29 (MNSRFTSAFTPFAVSLGLLLVMTSAFPTP) are cleaved as a signal peptide. N-linked (GlcNAc...) asparagine glycosylation occurs at Asn-38. The cysteines at positions 72 and 78 are disulfide-linked. Ser-81 is subject to Phosphoserine. Cys-101 and Cys-111 are disulfide-bonded.

This sequence belongs to the IL-6 superfamily. Component of a hexamer of two molecules each of IL6, IL6R and IL6ST; first binds to IL6R to associate with the signaling subunit IL6ST. Interacts with IL6R (via the N-terminal ectodomain); this interaction may be affected by IL6R-binding with SORL1, hence decreasing IL6 cis signaling. Interacts with SORL1 (via the N-terminal ectodomain); this interaction leads to IL6 internalization and lysosomal degradation. May form a trimeric complex with the soluble SORL1 ectodomain and soluble IL6R receptor; this interaction might stabilize circulating IL6, hence promoting IL6 trans signaling.

The protein resides in the secreted. Its function is as follows. Cytokine with a wide variety of biological functions in immunity, tissue regeneration, and metabolism. Binds to IL6R, then the complex associates to the signaling subunit IL6ST/gp130 to trigger the intracellular IL6-signaling pathway. The interaction with the membrane-bound IL6R and IL6ST stimulates 'classic signaling', whereas the binding of IL6 and soluble IL6R to IL6ST stimulates 'trans-signaling'. Alternatively, 'cluster signaling' occurs when membrane-bound IL6:IL6R complexes on transmitter cells activate IL6ST receptors on neighboring receiver cells. IL6 is a potent inducer of the acute phase response. Rapid production of IL6 contributes to host defense during infection and tissue injury, but excessive IL6 synthesis is involved in disease pathology. In the innate immune response, is synthesized by myeloid cells, such as macrophages and dendritic cells, upon recognition of pathogens through toll-like receptors (TLRs) at the site of infection or tissue injury. In the adaptive immune response, is required for the differentiation of B cells into immunoglobulin-secreting cells. Plays a major role in the differentiation of CD4(+) T cell subsets. Essential factor for the development of T follicular helper (Tfh) cells that are required for the induction of germinal-center formation. Required to drive naive CD4(+) T cells to the Th17 lineage. Also required for proliferation of myeloma cells and the survival of plasmablast cells. Functionally, acts as an essential factor in bone homeostasis and on vessels directly or indirectly by induction of VEGF, resulting in increased angiogenesis activity and vascular permeability. Induces, through 'trans-signaling' and synergistically with IL1B and TNF, the production of VEGF. Involved in metabolic controls, is discharged into the bloodstream after muscle contraction increasing lipolysis and improving insulin resistance. 'Trans-signaling' in central nervous system also regulates energy and glucose homeostasis. Mediates, through GLP-1, crosstalk between insulin-sensitive tissues, intestinal L cells and pancreatic islets to adapt to changes in insulin demand. Also acts as a myokine. Plays a protective role during liver injury, being required for maintenance of tissue regeneration. Also has a pivotal role in iron metabolism by regulating HAMP/hepcidin expression upon inflammation or bacterial infection. Through activation of IL6ST-YAP-NOTCH pathway, induces inflammation-induced epithelial regeneration. This is Interleukin-6 (IL6) from Bubalus bubalis (Domestic water buffalo).